Here is a 321-residue protein sequence, read N- to C-terminus: tRNA-dihydrouridine synthase B (321 aa).

Residues 16–18 (PMA) and Q70 contribute to the FMN site. The active-site Proton donor is C100. Residues K139, 200–202 (NGD), and 224–225 (GR) contribute to the FMN site.

The protein belongs to the Dus family. DusB subfamily. It depends on FMN as a cofactor.

It carries out the reaction a 5,6-dihydrouridine in tRNA + NAD(+) = a uridine in tRNA + NADH + H(+). The enzyme catalyses a 5,6-dihydrouridine in tRNA + NADP(+) = a uridine in tRNA + NADPH + H(+). In terms of biological role, catalyzes the synthesis of 5,6-dihydrouridine (D), a modified base found in the D-loop of most tRNAs, via the reduction of the C5-C6 double bond in target uridines. In Escherichia coli O157:H7, this protein is tRNA-dihydrouridine synthase B.